The sequence spans 685 residues: Protein OCTOPUS (685 aa).

3 disordered regions span residues 1-34, 152-202, and 280-314; these read MNPA…CNRH, RNLP…DYVE, and KWRQ…RQLR. Positions 179–202 are enriched in acidic residues; sequence VNDEGEAESDDEELEEEEEEDYVE. Residues 280 to 291 show a composition bias toward basic residues; sequence KWRQNQKMKKRR. Residues 292-314 are compositionally biased toward basic and acidic residues; the sequence is NGGDHRPGSARLPVEKPIGRQLR. A Phosphoserine modification is found at Ser-318. The tract at residues 419-471 is disordered; the sequence is VEEPAPPPPVVNQTNGVSDPVIIPGGSIQTRDYYTDSSSRRRKSLDRSSSSMR. Residues 549–578 adopt a coiled-coil conformation; it reads LIYRKSVNKYEEEEEEEEDRYRRLNGGMVE. Residues 584 to 640 are disordered; it reads SWPELRNGGGGGGGPRMVRSNSNVSWRSSGGGSARKVNGLDRRNKSSRYSPKNGENG. The segment covering 601 to 611 has biased composition (low complexity); the sequence is VRSNSNVSWRS.

It belongs to the OCTOPUS family. Interacts with VCC. Post-translationally, phosphorylation at Ser-318 amplifies the promotion of protophloem differentiation. Expressed in provascular cells and phloem initials (e.g. protophloem, metaphloem, sieve element precursor cells and sieve element procambium precursor cells).

Its subcellular location is the cell membrane. It is found in the cytoplasm. Potentiates primary root protophloem differentiation. Required, together with VCC, for embryo provasculature development and cotyledon vascular complexity and connectivity. Regulates roots architecture. Mediates the recruitment of ASK7/BIN2 to the plasma membrane. This Arabidopsis thaliana (Mouse-ear cress) protein is Protein OCTOPUS.